The primary structure comprises 131 residues: Small ribosomal subunit protein uS9 (131 aa).

This sequence belongs to the universal ribosomal protein uS9 family.

This Glaesserella parasuis serovar 5 (strain SH0165) (Haemophilus parasuis) protein is Small ribosomal subunit protein uS9.